A 573-amino-acid chain; its full sequence is DNA ligase (573 aa).

Residue glutamate 250 coordinates ATP. The active-site N6-AMP-lysine intermediate is lysine 252. Positions 257, 272, 301, 342, 432, and 438 each coordinate ATP.

The protein belongs to the ATP-dependent DNA ligase family. It depends on Mg(2+) as a cofactor.

The enzyme catalyses ATP + (deoxyribonucleotide)n-3'-hydroxyl + 5'-phospho-(deoxyribonucleotide)m = (deoxyribonucleotide)n+m + AMP + diphosphate.. In terms of biological role, DNA ligase that seals nicks in double-stranded DNA during DNA replication, DNA recombination and DNA repair. This Methanococcus maripaludis (strain C7 / ATCC BAA-1331) protein is DNA ligase.